Consider the following 140-residue polypeptide: uncharacterized protein (140 aa).

This is an uncharacterized protein from Escherichia coli O157:H7.